The primary structure comprises 239 residues: Serine protease SplC (239 aa).

Residues 1–36 form the signal peptide; the sequence is MNKNIVIKSMAALAILTSVTGINAAVVEETQQIANA. Catalysis depends on charge relay system residues His75, Asp113, and Ser193.

The protein belongs to the peptidase S1B family.

The protein localises to the secreted. The chain is Serine protease SplC (splC) from Staphylococcus aureus (strain MW2).